Consider the following 339-residue polypeptide: DNA-directed RNA polymerase subunit alpha (339 aa).

Positions 1-238 (MVDPIVTKNW…EQLSIFINFD (238 aa)) are alpha N-terminal domain (alpha-NTD). Residues 255 to 339 (LNENLFRSVD…KAAPQGAPKV (85 aa)) are alpha C-terminal domain (alpha-CTD).

It belongs to the RNA polymerase alpha chain family. Homodimer. The RNAP catalytic core consists of 2 alpha, 1 beta, 1 beta' and 1 omega subunit. When a sigma factor is associated with the core the holoenzyme is formed, which can initiate transcription.

The catalysed reaction is RNA(n) + a ribonucleoside 5'-triphosphate = RNA(n+1) + diphosphate. In terms of biological role, DNA-dependent RNA polymerase catalyzes the transcription of DNA into RNA using the four ribonucleoside triphosphates as substrates. This chain is DNA-directed RNA polymerase subunit alpha, found in Anaeromyxobacter sp. (strain Fw109-5).